A 79-amino-acid chain; its full sequence is Conotoxin ArMKLT2-031 (79 aa).

The first 22 residues, 1-22, serve as a signal peptide directing secretion; that stretch reads MKLTCVLIIAVLFLTACQLTTG. Residues 23–46 constitute a propeptide that is removed on maturation; that stretch reads ETYSRGEQKDHALRSTDKNSKLTR. Pyrrolidone carboxylic acid is present on Gln-47. 3 disulfides stabilise this stretch: Cys-48-Cys-62, Cys-55-Cys-66, and Cys-61-Cys-73.

The protein belongs to the conotoxin O1 superfamily. Expressed by the venom duct.

It is found in the secreted. This is Conotoxin ArMKLT2-031 from Conus arenatus (Sand-dusted cone).